The following is a 219-amino-acid chain: NAD(P)H-quinone oxidoreductase subunit I (219 aa).

4Fe-4S ferredoxin-type domains follow at residues 55-84 and 95-124; these read GRIH…VDWV and RNYS…MTEE. Positions 64, 67, 70, 74, 104, 107, 110, and 114 each coordinate [4Fe-4S] cluster. The interval 192-219 is disordered; the sequence is LKAAGSMKAAEDERESSSSASNMEESAG. Residues 208-219 are compositionally biased toward low complexity; it reads SSSASNMEESAG.

This sequence belongs to the complex I 23 kDa subunit family. As to quaternary structure, NDH-1 is composed of at least 11 different subunits. It depends on [4Fe-4S] cluster as a cofactor.

It localises to the cellular thylakoid membrane. The catalysed reaction is a plastoquinone + NADH + (n+1) H(+)(in) = a plastoquinol + NAD(+) + n H(+)(out). The enzyme catalyses a plastoquinone + NADPH + (n+1) H(+)(in) = a plastoquinol + NADP(+) + n H(+)(out). Functionally, NDH-1 shuttles electrons from an unknown electron donor, via FMN and iron-sulfur (Fe-S) centers, to quinones in the respiratory and/or the photosynthetic chain. The immediate electron acceptor for the enzyme in this species is believed to be plastoquinone. Couples the redox reaction to proton translocation, and thus conserves the redox energy in a proton gradient. This Synechococcus sp. (strain CC9311) protein is NAD(P)H-quinone oxidoreductase subunit I.